The sequence spans 380 residues: M-protease (380 aa).

The first 27 residues, 1–27 (MKKPLGKIVASTALLISVAFSSSIASA), serve as a signal peptide directing secretion. Residues 28–111 (AEEAKEKYLI…IEEDAEVTTM (84 aa)) constitute a propeptide that is removed on maturation. The Inhibitor I9 domain occupies 34 to 111 (KYLIGFNEQE…IEEDAEVTTM (78 aa)). A Ca(2+)-binding site is contributed by glutamine 113. The Peptidase S8 domain occupies 116–379 (PWGISRVQAP…SGLVNAEAAT (264 aa)). Aspartate 143 (charge relay system) is an active-site residue. Aspartate 151 provides a ligand contact to Ca(2+). The active-site Charge relay system is histidine 173. The Ca(2+) site is built by leucine 184, asparagine 186, isoleucine 188, valine 190, alanine 274, tyrosine 276, alanine 279, and aspartate 302. Serine 326 acts as the Charge relay system in catalysis.

Belongs to the peptidase S8 family. As to quaternary structure, monomer. The cofactor is Ca(2+).

The protein localises to the secreted. Its activity is regulated as follows. Activity is inhibited by phenylmethylsulfonyl fluoride and chymostatin. In terms of biological role, alkaline serine protease that cleaves various substrates, including N-succinyl-Ala-Ala-Pro-Phe-pNA, N-succinyl-Ala-Ala-Pro-MetpNA, oxidized insulin B chain, casein, hemoglobin and scleroproteins, such as keratin, alpha-keratin and elastin. This Shouchella clausii (strain KSM-K16) (Alkalihalobacillus clausii) protein is M-protease (aprE).